The chain runs to 322 residues: Quinolinate synthase (322 aa).

The iminosuccinate site is built by H37 and S54. A [4Fe-4S] cluster-binding site is contributed by C99. Iminosuccinate contacts are provided by residues 125-127 (YVN) and S142. C185 contributes to the [4Fe-4S] cluster binding site. Iminosuccinate contacts are provided by residues 211–213 (HPE) and T228. C278 is a binding site for [4Fe-4S] cluster.

The protein belongs to the quinolinate synthase family. Type 2 subfamily. [4Fe-4S] cluster is required as a cofactor.

The protein resides in the cytoplasm. The enzyme catalyses iminosuccinate + dihydroxyacetone phosphate = quinolinate + phosphate + 2 H2O + H(+). It participates in cofactor biosynthesis; NAD(+) biosynthesis; quinolinate from iminoaspartate: step 1/1. In terms of biological role, catalyzes the condensation of iminoaspartate with dihydroxyacetone phosphate to form quinolinate. This Chlorobaculum tepidum (strain ATCC 49652 / DSM 12025 / NBRC 103806 / TLS) (Chlorobium tepidum) protein is Quinolinate synthase.